Here is a 168-residue protein sequence, read N- to C-terminus: G/U mismatch-specific DNA glycosylase (168 aa).

It belongs to the uracil-DNA glycosylase (UDG) superfamily. TDG/mug family. As to quaternary structure, binds DNA as a monomer.

It localises to the cytoplasm. The catalysed reaction is Specifically hydrolyzes mismatched double-stranded DNA and polynucleotides, releasing free uracil.. Excises ethenocytosine and uracil, which can arise by alkylation or deamination of cytosine, respectively, from the corresponding mispairs with guanine in ds-DNA. It is capable of hydrolyzing the carbon-nitrogen bond between the sugar-phosphate backbone of the DNA and the mispaired base. The complementary strand guanine functions in substrate recognition. Required for DNA damage lesion repair in stationary-phase cells. The polypeptide is G/U mismatch-specific DNA glycosylase (Enterobacter sp. (strain 638)).